We begin with the raw amino-acid sequence, 197 residues long: HTH-type transcriptional regulator BetI (197 aa).

The HTH tetR-type domain occupies 8–68 (PIRRQQLIEA…ATMRYLMSVL (61 aa)). The segment at residues 31-50 (SIALIARLAGVSNGIISHYF) is a DNA-binding region (H-T-H motif).

It functions in the pathway amine and polyamine biosynthesis; betaine biosynthesis via choline pathway [regulation]. Its function is as follows. Repressor involved in the biosynthesis of the osmoprotectant glycine betaine. It represses transcription of the choline transporter BetT and the genes of BetAB involved in the synthesis of glycine betaine. The chain is HTH-type transcriptional regulator BetI from Pseudomonas fluorescens (strain Pf0-1).